Here is a 296-residue protein sequence, read N- to C-terminus: UBX domain-containing protein 1-A (296 aa).

Residues 1–42 form the UBA domain; sequence MAECSTLESLIEMGFSSTRAEKALTATGNQGIEPAMDWLVEH. A disordered region spans residues 43–216; sequence EDDPDIDEPS…VQEPPTKKEY (174 aa). Low complexity predominate over residues 61–75; sequence TDTADTTDTTDTTDT. 3 stretches are compositionally biased toward basic and acidic residues: residues 86 to 100, 107 to 123, and 138 to 178; these read PLTEEEKEKQTKRMM, QNEREEREKKERIEQEK, and KMQE…DRAR. Positions 87–177 form a coiled coil; it reads LTEEEKEKQT…KIARDKADRA (91 aa). The span at 191–206 shows a compositional bias: low complexity; the sequence is PAETSIPATTPSPSSP. Positions 214-293 constitute a UBX domain; sequence KEYDQCRIQV…GLVPTAVLIV (80 aa).

It localises to the cytoplasm. In terms of biological role, component of a complex required to couple deglycosylation and proteasome-mediated degradation of misfolded proteins in the endoplasmic reticulum that are retrotranslocated in the cytosol. Involved in ubiquitin-proteasome systems. The chain is UBX domain-containing protein 1-A (ubxn1-a) from Xenopus laevis (African clawed frog).